Here is a 271-residue protein sequence, read N- to C-terminus: NAD kinase (271 aa).

Asp-64 serves as the catalytic Proton acceptor. Residues 64-65 (DG), Arg-69, 132-133 (NE), Lys-143, Arg-160, Asp-162, 173-178 (TAYAMS), Ala-197, and Gln-231 contribute to the NAD(+) site.

This sequence belongs to the NAD kinase family. It depends on a divalent metal cation as a cofactor.

It is found in the cytoplasm. It catalyses the reaction NAD(+) + ATP = ADP + NADP(+) + H(+). Its function is as follows. Involved in the regulation of the intracellular balance of NAD and NADP, and is a key enzyme in the biosynthesis of NADP. Catalyzes specifically the phosphorylation on 2'-hydroxyl of the adenosine moiety of NAD to yield NADP. The polypeptide is NAD kinase (Methanocorpusculum labreanum (strain ATCC 43576 / DSM 4855 / Z)).